The following is a 418-amino-acid chain: Fumarylacetoacetase (418 aa).

D127 provides a ligand contact to Ca(2+). Catalysis depends on H134, which acts as the Proton acceptor. Ca(2+) is bound by residues E200, E202, and D235. The Mg(2+) site is built by D235, K255, and T259.

It belongs to the FAH family. Ca(2+) serves as cofactor. Mg(2+) is required as a cofactor. As to expression, highly expressed in the intestine and the hypodermis.

The enzyme catalyses 4-fumarylacetoacetate + H2O = acetoacetate + fumarate + H(+). It functions in the pathway amino-acid degradation; L-phenylalanine degradation; acetoacetate and fumarate from L-phenylalanine: step 6/6. Fumarylacetoacetase involved in the tyrosine degradation pathway. This is Fumarylacetoacetase from Caenorhabditis elegans.